We begin with the raw amino-acid sequence, 278 residues long: Msm operon regulatory protein (278 aa).

The 99-residue stretch at 176-274 folds into the HTH araC/xylS-type domain; it reads NQVKKIIHSQ…GKSPSKFRKE (99 aa). DNA-binding regions (H-T-H motif) lie at residues 193-214 and 241-264; these read NDIA…RKST and IAEI…KNYF.

In terms of biological role, regulatory protein for the msm operon for multiple sugar metabolism. Activates the transcription of the msmEFGK, aga, dexB and gftA genes. The protein is Msm operon regulatory protein (msmR) of Streptococcus mutans serotype c (strain ATCC 700610 / UA159).